The primary structure comprises 215 residues: Urease accessory protein UreG (215 aa).

A GTP-binding site is contributed by 15–22 (GPVGSGKT).

This sequence belongs to the SIMIBI class G3E GTPase family. UreG subfamily. In terms of assembly, homodimer. UreD, UreF and UreG form a complex that acts as a GTP-hydrolysis-dependent molecular chaperone, activating the urease apoprotein by helping to assemble the nickel containing metallocenter of UreC. The UreE protein probably delivers the nickel.

It is found in the cytoplasm. Functionally, facilitates the functional incorporation of the urease nickel metallocenter. This process requires GTP hydrolysis, probably effectuated by UreG. The chain is Urease accessory protein UreG from Alcanivorax borkumensis (strain ATCC 700651 / DSM 11573 / NCIMB 13689 / SK2).